The sequence spans 121 residues: Small ribosomal subunit protein uS13 (121 aa).

A disordered region spans residues 94 to 121 (GLPLRGQRTRTNARTRKGPRKAGVALKK).

It belongs to the universal ribosomal protein uS13 family. In terms of assembly, part of the 30S ribosomal subunit. Forms a loose heterodimer with protein S19. Forms two bridges to the 50S subunit in the 70S ribosome.

Its function is as follows. Located at the top of the head of the 30S subunit, it contacts several helices of the 16S rRNA. In the 70S ribosome it contacts the 23S rRNA (bridge B1a) and protein L5 of the 50S subunit (bridge B1b), connecting the 2 subunits; these bridges are implicated in subunit movement. Contacts the tRNAs in the A and P-sites. The sequence is that of Small ribosomal subunit protein uS13 from Ralstonia nicotianae (strain ATCC BAA-1114 / GMI1000) (Ralstonia solanacearum).